Reading from the N-terminus, the 252-residue chain is Glucosamine-6-phosphate deaminase (252 aa).

The Proton acceptor; for enolization step role is filled by Asp-67. Residue Asn-137 is the For ring-opening step of the active site. Catalysis depends on His-139, which acts as the Proton acceptor; for ring-opening step. Glu-144 functions as the For ring-opening step in the catalytic mechanism.

It belongs to the glucosamine/galactosamine-6-phosphate isomerase family. NagB subfamily.

It carries out the reaction alpha-D-glucosamine 6-phosphate + H2O = beta-D-fructose 6-phosphate + NH4(+). The protein operates within amino-sugar metabolism; N-acetylneuraminate degradation; D-fructose 6-phosphate from N-acetylneuraminate: step 5/5. In terms of biological role, catalyzes the reversible isomerization-deamination of glucosamine 6-phosphate (GlcN6P) to form fructose 6-phosphate (Fru6P) and ammonium ion. In Staphylococcus aureus (strain bovine RF122 / ET3-1), this protein is Glucosamine-6-phosphate deaminase.